Reading from the N-terminus, the 816-residue chain is Larval serum protein 1 alpha chain (816 aa).

Positions 1–16 (MKFAIAFLACVAVVTA) are cleaved as a signal peptide.

This sequence belongs to the hemocyanin family. In terms of assembly, heterohexamer, composed of three subunits, alpha, beta and gamma. As to expression, larval hemolymph.

It localises to the secreted. The protein resides in the extracellular space. In terms of biological role, larval storage protein (LSP) which may serve as a store of amino acids for synthesis of adult proteins. This chain is Larval serum protein 1 alpha chain (Lsp1alpha), found in Drosophila melanogaster (Fruit fly).